The sequence spans 249 residues: Transmembrane protein 150C (249 aa).

Residues 1-9 (MDGKKCSVW) are Cytoplasmic-facing. Residues 10-30 (MFLPLVFTVFTSAGLWIVYFI) traverse the membrane as a helical segment. Residues 31–64 (AVEDDKIFPLNSAERKPGVKHAPYISIAGDEPPA) are Extracellular-facing. Residues 65 to 85 (SCVFSQVMNMAAFLALVVAVL) form a helical membrane-spanning segment. Over 86-97 (RFIQLKPKVLNP) the chain is Cytoplasmic. Residues 98 to 118 (WLNISGLVALCLASFGMTLLG) traverse the membrane as a helical segment. The Extracellular portion of the chain corresponds to 119–130 (NFQLTNDEEIHN). A helical transmembrane segment spans residues 131 to 151 (VGTSLTFGFGTLTCWIQAALT). The Cytoplasmic portion of the chain corresponds to 152–168 (LKVNIKNEGRKVGIPRV). Residues 169 to 189 (ILSASITLCVVLYFILMAQGI) form a helical membrane-spanning segment. Residues 190-192 (HMY) are Extracellular-facing. A helical membrane pass occupies residues 193–213 (AARVQWGLVMCFLSYFGTFAV). Over 214–249 (EFRHYRYEIVCSEYQENFLSFSESLSEASEYQTDQV) the chain is Cytoplasmic.

This sequence belongs to the DRAM/TMEM150 family.

It localises to the cell membrane. It is found in the lysosome membrane. It carries out the reaction Ca(2+)(in) = Ca(2+)(out). The catalysed reaction is Na(+)(in) = Na(+)(out). The enzyme catalyses K(+)(in) = K(+)(out). It catalyses the reaction Mg(2+)(in) = Mg(2+)(out). In terms of biological role, nonselective cationic channel with high permeability to Ca(2+). Component of a mechanosensitive cation channel. Confers mechanically activated (MA) currents with slow inactivation kinetics. May contribute to proprioception. The chain is Transmembrane protein 150C (TMEM150C) from Bos taurus (Bovine).